A 272-amino-acid polypeptide reads, in one-letter code: Proteasome subunit beta type-5 (272 aa).

Residues 1 to 62 (MINIDFDNIE…APKALEFAHG (62 aa)) constitute a propeptide, removed in mature form. The Nucleophile role is filled by Thr-63.

The protein belongs to the peptidase T1B family. In terms of assembly, the 26S proteasome consists of a 20S proteasome core and two 19S regulatory subunits. The 20S proteasome core is composed of 28 subunits that are arranged in four stacked rings, resulting in a barrel-shaped structure. The two end rings are each formed by seven alpha subunits, and the two central rings are each formed by seven beta subunits. The catalytic chamber with the active sites is on the inside of the barrel.

The protein resides in the cytoplasm. It localises to the nucleus. The catalysed reaction is Cleavage of peptide bonds with very broad specificity.. In terms of biological role, the proteasome is a multicatalytic proteinase complex which is characterized by its ability to cleave peptides with Arg, Phe, Tyr, Leu, and Glu adjacent to the leaving group at neutral or slightly basic pH. The proteasome has an ATP-dependent proteolytic activity. The polypeptide is Proteasome subunit beta type-5 (psmB5) (Dictyostelium discoideum (Social amoeba)).